The sequence spans 158 residues: Small ribosomal subunit protein uS15 (158 aa).

Residues 1–18 are compositionally biased toward basic residues; that stretch reads MARMHARKRGKSGSKRPP. Residues 1-21 are disordered; sequence MARMHARKRGKSGSKRPPRTA.

This sequence belongs to the universal ribosomal protein uS15 family. As to quaternary structure, part of the 30S ribosomal subunit.

This is Small ribosomal subunit protein uS15 from Pyrococcus horikoshii (strain ATCC 700860 / DSM 12428 / JCM 9974 / NBRC 100139 / OT-3).